A 387-amino-acid polypeptide reads, in one-letter code: Chorismate synthase (387 aa).

NADP(+) contacts are provided by R40 and R46. Residues 129 to 131 (RSS), 250 to 251 (QA), G295, 310 to 314 (KPIPT), and R336 contribute to the FMN site.

It belongs to the chorismate synthase family. In terms of assembly, homotetramer. FMNH2 is required as a cofactor.

It catalyses the reaction 5-O-(1-carboxyvinyl)-3-phosphoshikimate = chorismate + phosphate. The protein operates within metabolic intermediate biosynthesis; chorismate biosynthesis; chorismate from D-erythrose 4-phosphate and phosphoenolpyruvate: step 7/7. Its function is as follows. Catalyzes the anti-1,4-elimination of the C-3 phosphate and the C-6 proR hydrogen from 5-enolpyruvylshikimate-3-phosphate (EPSP) to yield chorismate, which is the branch point compound that serves as the starting substrate for the three terminal pathways of aromatic amino acid biosynthesis. This reaction introduces a second double bond into the aromatic ring system. The chain is Chorismate synthase from Desulforamulus reducens (strain ATCC BAA-1160 / DSM 100696 / MI-1) (Desulfotomaculum reducens).